Here is a 129-residue protein sequence, read N- to C-terminus: Natriuretic peptides B (129 aa).

The N-terminal stretch at 1–26 is a signal peptide; that stretch reads MDPQTALSRALLLLLFLHLSLLGCRS. Residues Cys107 and Cys123 are joined by a disulfide bond.

Belongs to the natriuretic peptide family. The precursor molecule is proteolytically cleaved, possibly by FURIN or CORIN, to produce the active peptide. May undergo further proteolytic cleavage by various proteases such as DPP4, MME and possibly FAP, to give rise to a variety of shorter peptides. May be cleaved at Pro-99 by the prolyl endopeptidase FAP (seprase) activity (in vitro). May be degraded by IDE. During IDE degradation, the resulting products initially increase the activation of NPR1 and can also stimulate NPR2 to produce cGMP before the fragments are completely degraded and inactivated by IDE (in vitro).

The protein localises to the secreted. Its function is as follows. Cardiac hormone that plays a key role in mediating cardio-renal homeostasis. May also function as a paracrine antifibrotic factor in the heart. Acts by specifically binding and stimulating NPR1 to produce cGMP, which in turn activates effector proteins that drive various biological responses. Involved in regulating the extracellular fluid volume and maintaining the fluid-electrolyte balance through natriuresis, diuresis, vasorelaxation, and inhibition of renin and aldosterone secretion. Binds the clearance receptor NPR3. The polypeptide is Natriuretic peptides B (NPPB) (Bos taurus (Bovine)).